The chain runs to 356 residues: Probable methyltransferase-like protein 15 homolog (356 aa).

S-adenosyl-L-methionine-binding positions include 55–57 (GGH), D74, F103, D126, and Q133.

It belongs to the methyltransferase superfamily. RsmH family.

Its function is as follows. Probable S-adenosyl-L-methionine-dependent methyltransferase. The sequence is that of Probable methyltransferase-like protein 15 homolog from Drosophila melanogaster (Fruit fly).